The sequence spans 680 residues: Methionine--tRNA ligase (680 aa).

The short motif at proline 15 to histidine 25 is the 'HIGH' region element. Zn(2+) is bound by residues cysteine 146, cysteine 149, cysteine 159, and cysteine 162. The 'KMSKS' region motif lies at lysine 332 to serine 336. Position 335 (lysine 335) interacts with ATP. Residues aspartate 579–methionine 680 enclose the tRNA-binding domain.

It belongs to the class-I aminoacyl-tRNA synthetase family. MetG type 1 subfamily. In terms of assembly, homodimer. Requires Zn(2+) as cofactor.

The protein localises to the cytoplasm. The catalysed reaction is tRNA(Met) + L-methionine + ATP = L-methionyl-tRNA(Met) + AMP + diphosphate. Is required not only for elongation of protein synthesis but also for the initiation of all mRNA translation through initiator tRNA(fMet) aminoacylation. The protein is Methionine--tRNA ligase of Photobacterium profundum (strain SS9).